Reading from the N-terminus, the 333-residue chain is Mitochondrial glycine transporter (333 aa).

The tract at residues 1 to 25 (MTNAATDKSVASVARDVSTGKPGKS) is disordered. 3 Solcar repeats span residues 26–109 (PDAA…MRAA), 127–220 (LLPM…FKND), and 236–319 (RSSV…LIKS). Transmembrane regions (helical) follow at residues 32 to 57 (LLSG…TRLQ), 84 to 110 (GAVP…RAAV), 133 to 158 (LATG…TRFE), 195 to 218 (GSVA…EGFK), 240 to 266 (INSS…KTRL), and 294 to 312 (GLSL…SWCI).

This sequence belongs to the mitochondrial carrier (TC 2.A.29) family. SLC25A38 subfamily.

It localises to the mitochondrion inner membrane. It catalyses the reaction glycine(in) = glycine(out). Functionally, mitochondrial glycine transporter that imports glycine into the mitochondrial matrix. Plays an important role in providing glycine for the first enzymatic step in heme biosynthesis, the condensation of glycine with succinyl-CoA to produce 5-aminolevulinate (ALA) in the mitochondrial matrix. This chain is Mitochondrial glycine transporter, found in Scheffersomyces stipitis (strain ATCC 58785 / CBS 6054 / NBRC 10063 / NRRL Y-11545) (Yeast).